The chain runs to 557 residues: Eudesmanediol synthase (557 aa).

2 residues coordinate Mg(2+): D310 and D314. Substrate-binding residues include D310, D314, and R450. The short motif at 310–314 is the DDXXD motif element; the sequence is DDTFD. Positions 453 and 457 each coordinate Mg(2+).

Belongs to the terpene synthase family. In terms of assembly, monomer. The cofactor is Mg(2+). Requires Mn(2+) as cofactor.

The protein resides in the cytoplasm. It catalyses the reaction (2E,6E)-farnesyl diphosphate + 2 H2O = 7-epi-ent-eudesmane-5,11-diol + diphosphate. It functions in the pathway secondary metabolite biosynthesis; terpenoid biosynthesis. Component of the volatile terpenes biosynthesis pathways. Dihydroxylated sesquiterpenoid synthase that generates dually hydroxylated products directly from (E,E)-farnesyl diphosphate, primarily eudesmane-2,11-diol, along with two closely related structural isomers. The chain is Eudesmanediol synthase from Zea mays (Maize).